The primary structure comprises 828 residues: Mediator of RNA polymerase II transcription subunit 16 (828 aa).

WD repeat units lie at residues 68-107 (GHQE…ANSW), 199-241 (RCRV…VSEK), 264-308 (DKFP…LPLN), 622-663 (NQGS…CLPV), and 777-816 (FPTE…TCLC).

The protein belongs to the Mediator complex subunit 16 family. In terms of assembly, component of the Mediator complex.

The protein resides in the nucleus. Functionally, component of the Mediator complex, a coactivator involved in the regulated transcription of nearly all RNA polymerase II-dependent genes. Mediator functions as a bridge to convey information from gene-specific regulatory proteins to the basal RNA polymerase II transcription machinery. Mediator is recruited to promoters by direct interactions with regulatory proteins and serves as a scaffold for the assembly of a functional preinitiation complex with RNA polymerase II and the general transcription factors. The polypeptide is Mediator of RNA polymerase II transcription subunit 16 (med16) (Xenopus tropicalis (Western clawed frog)).